The chain runs to 118 residues: MLPARYRMTRSTEFSTTVSKGVRSAQPDLVLHMANVLDDPSGPRVGLVVAKSVGNAVVRHRVSRRLRHSVHPMLDELQPGHRLVIRALPGAASATSARLHQELSAALRRARPRVEASA.

Belongs to the RnpA family. Consists of a catalytic RNA component (M1 or rnpB) and a protein subunit.

The enzyme catalyses Endonucleolytic cleavage of RNA, removing 5'-extranucleotides from tRNA precursor.. In terms of biological role, RNaseP catalyzes the removal of the 5'-leader sequence from pre-tRNA to produce the mature 5'-terminus. It can also cleave other RNA substrates such as 4.5S RNA. The protein component plays an auxiliary but essential role in vivo by binding to the 5'-leader sequence and broadening the substrate specificity of the ribozyme. This is Ribonuclease P protein component from Mycobacterium sp. (strain KMS).